We begin with the raw amino-acid sequence, 209 residues long: Outer-membrane lipoprotein carrier protein (209 aa).

Positions 1–21 (MHRQLRYAVLATALFASTAFA) are cleaved as a signal peptide.

The protein belongs to the LolA family. In terms of assembly, monomer.

Its subcellular location is the periplasm. Functionally, participates in the translocation of lipoproteins from the inner membrane to the outer membrane. Only forms a complex with a lipoprotein if the residue after the N-terminal Cys is not an aspartate (The Asp acts as a targeting signal to indicate that the lipoprotein should stay in the inner membrane). The chain is Outer-membrane lipoprotein carrier protein from Xanthomonas campestris pv. campestris (strain 8004).